A 216-amino-acid polypeptide reads, in one-letter code: ATP phosphoribosyltransferase (216 aa).

Belongs to the ATP phosphoribosyltransferase family. Short subfamily. In terms of assembly, heteromultimer composed of HisG and HisZ subunits.

The protein localises to the cytoplasm. It catalyses the reaction 1-(5-phospho-beta-D-ribosyl)-ATP + diphosphate = 5-phospho-alpha-D-ribose 1-diphosphate + ATP. It participates in amino-acid biosynthesis; L-histidine biosynthesis; L-histidine from 5-phospho-alpha-D-ribose 1-diphosphate: step 1/9. Its function is as follows. Catalyzes the condensation of ATP and 5-phosphoribose 1-diphosphate to form N'-(5'-phosphoribosyl)-ATP (PR-ATP). Has a crucial role in the pathway because the rate of histidine biosynthesis seems to be controlled primarily by regulation of HisG enzymatic activity. This is ATP phosphoribosyltransferase from Thiobacillus denitrificans (strain ATCC 25259 / T1).